The following is a 46-amino-acid chain: Hellethionin-D (46 aa).

Disulfide bonds link cysteine 3–cysteine 40, cysteine 4–cysteine 32, cysteine 12–cysteine 30, and cysteine 16–cysteine 26.

The protein belongs to the plant thionin (TC 1.C.44) family. 4 C-C subfamily.

The protein localises to the secreted. Thionins are small plant proteins which are toxic to animal cells. They seem to exert their toxic effect at the level of the cell membrane. Their precise function is not known. The polypeptide is Hellethionin-D (Helleborus purpurascens (Purple hellebore)).